The following is a 394-amino-acid chain: Small RNA 2'-O-methyltransferase (394 aa).

Residues aspartate 78 and serine 114 each coordinate S-adenosyl-L-methionine. Mg(2+) contacts are provided by glutamate 132, glutamate 135, histidine 136, and histidine 181.

Belongs to the methyltransferase superfamily. HEN1 family. It depends on Mg(2+) as a cofactor.

The protein localises to the cytoplasm. It carries out the reaction small RNA 3'-end nucleotide + S-adenosyl-L-methionine = small RNA 3'-end 2'-O-methylnucleotide + S-adenosyl-L-homocysteine + H(+). Methyltransferase that adds a 2'-O-methyl group at the 3'-end of piRNAs, a class of 24 to 30 nucleotide RNAs that are generated by a Dicer-independent mechanism and are primarily derived from transposons and other repeated sequence elements. This probably protects the 3'-end of piRNAs from uridylation activity and subsequent degradation. Stabilization of piRNAs is essential for gametogenesis. The chain is Small RNA 2'-O-methyltransferase (Henmt1) from Rattus norvegicus (Rat).